The following is a 124-amino-acid chain: Small ribosomal subunit protein eS8 (124 aa).

Positions 1–22 are enriched in basic residues; sequence MQYQGRSKRSKTGARLRPRSKK. Disordered regions lie at residues 1 to 40 and 102 to 124; these read MQYQ…GEPR and AGTA…RVDE. A compositionally biased stretch (basic and acidic residues) spans 23-32; sequence SKSELGREPT. The span at 106-124 shows a compositional bias: polar residues; the sequence is RVTSRPGQDGQVNATRVDE.

The protein belongs to the eukaryotic ribosomal protein eS8 family. As to quaternary structure, part of the 30S ribosomal subunit.

The chain is Small ribosomal subunit protein eS8 from Halobacterium salinarum (strain ATCC 29341 / DSM 671 / R1).